Consider the following 184-residue polypeptide: Large ribosomal subunit protein eL13 (184 aa).

The disordered stretch occupies residues 28-53 (PARKERRRQARKAKAQRIAPRPASGP). A compositionally biased stretch (basic residues) spans 31–42 (KERRRQARKAKA).

The protein belongs to the eukaryotic ribosomal protein eL13 family.

This is Large ribosomal subunit protein eL13 (RPL13) from Schistosoma mansoni (Blood fluke).